Consider the following 508-residue polypeptide: Pentatricopeptide repeat-containing protein At5g48730, chloroplastic (508 aa).

Positions 1–10 are enriched in polar residues; it reads MVSLSTSTSH. The tract at residues 1 to 22 is disordered; the sequence is MVSLSTSTSHAPPLPTNRRTAE. A chloroplast-targeting transit peptide spans 1–28; sequence MVSLSTSTSHAPPLPTNRRTAERTFTVR. PPR repeat units lie at residues 149–183, 184–214, 220–254, 255–290, 291–325, 326–360, 361–395, 396–430, 431–465, and 466–500; these read NVGIYVKLIVMLGKCKQPEKAHELFQEMINEGCVV, NHEVYTALVSAYSRSGRFDAAFTLLERMKSS, DVHTYSILIKSFLQVFAFDKVQDLLSDMRRQGIRP, NTITYNTLIDAYGKAKMFVEMESTLIQMLGEDDCKP, DSWTMNSTLRAFGGNGQIEMMENCYEKFQSSGIEP, NIRTFNILLDSYGKSGNYKKMSAVMEYMQKYHYSW, TIVTYNVVIDAFGRAGDLKQMEYLFRLMQSERIFP, SCVTLCSLVRAYGRASKADKIGGVLRFIENSDIRL, DLVFFNCLVDAYGRMEKFAEMKGVLELMEKKGFKP, and DKITYRTMVKAYRISGMTTHVKELHGVVESVGEAQ.

Belongs to the PPR family. P subfamily.

Its subcellular location is the plastid. The protein resides in the chloroplast. The polypeptide is Pentatricopeptide repeat-containing protein At5g48730, chloroplastic (Arabidopsis thaliana (Mouse-ear cress)).